The following is a 282-amino-acid chain: MASILTNSSALTALQTLASTNKSLESTQNRISTGLRISEASDNASYWSIATSMKSDNKANSAVQDALGLGAGKVDTAYSAINKIRESVDDIKTKLVSAMGASTEDKGKIETEIKSIVANINSALSNANYAGSNLLNGPTTDLNVVASYNRSGNAVAVDKITVKATDTDAKTMVKDIVDAGFFTSASDDTAIGTALNTVETALASLATGAATLGAAKSQIDSQKSFLSGLQDSIEKGVGTLVDADMNKESARLSALQVQQQLGVQALSIANSSNQSILSLFRG.

It belongs to the bacterial flagellin family.

It localises to the secreted. The protein localises to the bacterial flagellum. Its function is as follows. Flagellin is the subunit protein which polymerizes to form the filaments of bacterial flagella. The flagellum is required to cause a persistent disease in a murine model of infection. The polypeptide is Flagellin (fliC) (Brucella melitensis biotype 1 (strain ATCC 23456 / CCUG 17765 / NCTC 10094 / 16M)).